The primary structure comprises 199 residues: Probable chemoreceptor glutamine deamidase CheD (199 aa).

Belongs to the CheD family.

The catalysed reaction is L-glutaminyl-[protein] + H2O = L-glutamyl-[protein] + NH4(+). Probably deamidates glutamine residues to glutamate on methyl-accepting chemotaxis receptors (MCPs), playing an important role in chemotaxis. The polypeptide is Probable chemoreceptor glutamine deamidase CheD (Cereibacter sphaeroides (strain ATCC 17023 / DSM 158 / JCM 6121 / CCUG 31486 / LMG 2827 / NBRC 12203 / NCIMB 8253 / ATH 2.4.1.) (Rhodobacter sphaeroides)).